The sequence spans 1222 residues: ATP-dependent helicase/nuclease subunit A (1222 aa).

The UvrD-like helicase ATP-binding domain maps to 39-495; the sequence is QKRTAQQIEA…ILLKENFRSQ (457 aa). Position 60-67 (60-67) interacts with ATP; it reads ASAGSGKT. One can recognise a UvrD-like helicase C-terminal domain in the interval 524–810; it reads QLIAGSHAQT…NLMTIHKSKG (287 aa).

The protein belongs to the helicase family. AddA subfamily. Heterodimer of AddA and AddB/RexB. The cofactor is Mg(2+).

It carries out the reaction Couples ATP hydrolysis with the unwinding of duplex DNA by translocating in the 3'-5' direction.. The catalysed reaction is ATP + H2O = ADP + phosphate + H(+). Its function is as follows. The heterodimer acts as both an ATP-dependent DNA helicase and an ATP-dependent, dual-direction single-stranded exonuclease. Recognizes the chi site generating a DNA molecule suitable for the initiation of homologous recombination. The AddA nuclease domain is required for chi fragment generation; this subunit has the helicase and 3' -&gt; 5' nuclease activities. This Streptococcus pyogenes serotype M12 (strain MGAS9429) protein is ATP-dependent helicase/nuclease subunit A.